The primary structure comprises 416 residues: CinA-like protein (416 aa).

Belongs to the CinA family.

This is CinA-like protein from Synechocystis sp. (strain ATCC 27184 / PCC 6803 / Kazusa).